Consider the following 641-residue polypeptide: MTTPALLPLSGRRIPPLNLGPPSFPHHRATLRLSEKFILLLILSAFITLCFGAFFFLPDSSKHKRFDLGLEDVLIPHVDAGKGAKNPGVFLIHGPDEHRHREEEERLRNKIRADHEKALEEAKEKLRKSREEIRAEIQTEKNKVAQAMKTKETRVLPPVPVPQRVGVSGGDPEDMEIKKKRDKIKEMMKHAWDNYRTYGWGHNELRPIARKGHSTNIFGSSQMGATIVDALDTLYIMGLHDEFMDGQRWIEENLDFSVNSEVSVFEVNIRFIGGLLAAYYLSGEEIFKTKAVQLAEKLLPAFNTPTGIPWAMVNLKSGVGRNWGWASAGSSILAEFGTLHMEFVHLSYLTGDLTYYNKVMHIRKLLQKMERPNGLYPNYLNPRTGRWGQYHTSVGGLGDSFYEYLLKAWLMSDKTDHEARRMYDDAVEAIEKHLIKKSRGGLVFIGEWKNGHLERKMGHLACFAGGMFALGADGSRKDKAGHYLELGAEIARTCHESYDRTALKLGPESFKFDGAVEAVAVRQAEKYYILRPEVIETYWYLWRFTHDPRYRQWGWEAALAIEKSCRVSGGFSGVKDVYAPTPVHDDVQQSFFLAETLKYLYLLFSGDDLLPLDHWVFNTEAHPLPVLRLANSTLSGNPAVR.

Thr-2 bears the N-acetylthreonine mark. Residues 2–36 lie on the Cytoplasmic side of the membrane; it reads TTPALLPLSGRRIPPLNLGPPSFPHHRATLRLSEK. A helical; Signal-anchor for type II membrane protein membrane pass occupies residues 37–57; it reads FILLLILSAFITLCFGAFFFL. The Lumenal portion of the chain corresponds to 58–641; the sequence is PDSSKHKRFD…STLSGNPAVR (584 aa). Cys-462 and Cys-494 are oxidised to a cystine. Catalysis depends on Glu-508, which acts as the Proton donor. Thr-619 contacts Ca(2+). A glycan (N-linked (GlcNAc...) asparagine) is linked at Asn-631.

Belongs to the glycosyl hydrolase 47 family. The cofactor is Ca(2+).

It is found in the golgi apparatus membrane. The catalysed reaction is N(4)-(alpha-D-Man-(1-&gt;2)-alpha-D-Man-(1-&gt;2)-alpha-D-Man-(1-&gt;3)-[alpha-D-Man-(1-&gt;2)-alpha-D-Man-(1-&gt;3)-[alpha-D-Man-(1-&gt;2)-alpha-D-Man-(1-&gt;6)]-alpha-D-Man-(1-&gt;6)]-beta-D-Man-(1-&gt;4)-beta-D-GlcNAc-(1-&gt;4)-beta-D-GlcNAc)-L-asparaginyl-[protein] (N-glucan mannose isomer 9A1,2,3B1,2,3) + 4 H2O = N(4)-(alpha-D-Man-(1-&gt;3)-[alpha-D-Man-(1-&gt;3)-[alpha-D-Man-(1-&gt;6)]-alpha-D-Man-(1-&gt;6)]-beta-D-Man-(1-&gt;4)-beta-D-GlcNAc-(1-&gt;4)-beta-D-GlcNAc)-L-asparaginyl-[protein] (N-glucan mannose isomer 5A1,2) + 4 beta-D-mannose. The enzyme catalyses N(4)-(alpha-D-Man-(1-&gt;2)-alpha-D-Man-(1-&gt;2)-alpha-D-Man-(1-&gt;3)-[alpha-D-Man-(1-&gt;3)-[alpha-D-Man-(1-&gt;2)-alpha-D-Man-(1-&gt;6)]-alpha-D-Man-(1-&gt;6)]-beta-D-Man-(1-&gt;4)-beta-D-GlcNAc-(1-&gt;4)-beta-D-GlcNAc)-L-asparaginyl-[protein] (N-glucan mannose isomer 8A1,2,3B1,3) + 3 H2O = N(4)-(alpha-D-Man-(1-&gt;3)-[alpha-D-Man-(1-&gt;3)-[alpha-D-Man-(1-&gt;6)]-alpha-D-Man-(1-&gt;6)]-beta-D-Man-(1-&gt;4)-beta-D-GlcNAc-(1-&gt;4)-beta-D-GlcNAc)-L-asparaginyl-[protein] (N-glucan mannose isomer 5A1,2) + 3 beta-D-mannose. The protein operates within protein modification; protein glycosylation. Inhibited by both 1-deoxymannojirimycin and kifunensine. Involved in the maturation of Asn-linked oligosaccharides. Progressively trim alpha-1,2-linked mannose residues from Man(9)GlcNAc(2) to produce Man(5)GlcNAc(2). This is Mannosyl-oligosaccharide 1,2-alpha-mannosidase IB (Man1a2) from Mus musculus (Mouse).